The sequence spans 210 residues: Kinetochore protein Spc25 (210 aa).

Positions 42–106 form a coiled coil; it reads TMENIKRQQH…KKKQERDKLI (65 aa).

It belongs to the SPC25 family. In terms of assembly, component of the Ndc80 complex, which is composed of Ndc80, Nuf2 and Spc25.

It is found in the nucleus. It localises to the chromosome. The protein localises to the centromere. Its subcellular location is the kinetochore. In terms of biological role, acts as a component of the essential kinetochore-associated Ndc80 complex, which is required for chromosome segregation and spindle checkpoint activity during meiosis and mitosis. Required for kinetochore integrity and the organization of stable microtubule binding sites in the outer plate of the kinetochore. Participates in SAC signaling that responds specifically to disruptions in spindle microtubule dynamics. The NDC80 complex synergistically enhances the affinity of the SKA1 complex for microtubules and may allow the NDC80 complex to track depolymerizing microtubules. The sequence is that of Kinetochore protein Spc25 from Drosophila virilis (Fruit fly).